The following is a 1086-amino-acid chain: Lysine-specific demethylase 4B (1086 aa).

Residues 15 to 57 enclose the JmjN domain; the sequence is IMTFRPTMDEFRDFNRYVAYIESQGAHRAGLAKIIPPKEWKPR. 2-oxoglutarate is bound at residue Y133. A JmjC domain is found at 146-309; sequence VAQWNIGNLR…YGKVATQCTC (164 aa). Residues H189 and E191 each coordinate Fe cation. Residues N199 and K207 each coordinate 2-oxoglutarate. Zn(2+) is bound by residues C235 and H241. Residue K242 coordinates 2-oxoglutarate. Residue H277 coordinates Fe cation. Residues C307 and C309 each coordinate Zn(2+). Positions 379 to 395 are enriched in basic and acidic residues; sequence SRPWRKAEEERRREPTR. 2 disordered regions span residues 379–536 and 575–624; these read SRPW…PPGA and PMEL…LSVV. The segment covering 401–410 has biased composition (basic residues); that stretch reads SHRRRSQPKK. A compositionally biased stretch (acidic residues) spans 441–450; sequence MPEDEEEEEL. The segment covering 456-467 has biased composition (basic and acidic residues); the sequence is HEAEGVEEDGRG. Residues 468–480 are compositionally biased toward basic residues; sequence KPRPTKARNKKKT. Residues 512–522 are compositionally biased toward low complexity; it reads GPAMGPMAAEG. The segment covering 585–597 has biased composition (polar residues); the sequence is QAQAGDSQGTTPF. Position 599 is an N6-acetyllysine (K599). The segment at 719 to 777 adopts a PHD-type 1 zinc-finger fold; that stretch reads MCFTSSGENTEPLPANSYVGEDGTSPLISCAHCCLQVHASCYGVRPELAKEGWTCSRCA. The C2HC pre-PHD-type zinc-finger motif lies at 782-815; that stretch reads TAECCLCNLRGGALQRTTEHRWIHVICAIAVPEV. The segment at 838–895 adopts a PHD-type 2 zinc-finger fold; sequence LKCIYCRKRMKRVSGACIQCSYEHCSTSFHVTCAHAAGVLMEPDDWPYVVSITCLKHR. Tudor domains are found at residues 905 to 962 and 963 to 1019; these read RTVS…CLRL and GPPP…EELP. The segment at 1024–1043 is disordered; that stretch reads SRLSLSTGTPQEPSFSGDDV. The span at 1026-1037 shows a compositional bias: polar residues; sequence LSLSTGTPQEPS.

Belongs to the JHDM3 histone demethylase family. The cofactor is Fe(2+).

It localises to the nucleus. The catalysed reaction is N(6),N(6),N(6)-trimethyl-L-lysyl(9)-[histone H3] + 2 2-oxoglutarate + 2 O2 = N(6)-methyl-L-lysyl(9)-[histone H3] + 2 formaldehyde + 2 succinate + 2 CO2. Functionally, histone demethylase that specifically demethylates 'Lys-9' of histone H3, thereby playing a role in histone code. Does not demethylate histone H3 'Lys-4', H3 'Lys-27', H3 'Lys-36' nor H4 'Lys-20'. Only able to demethylate trimethylated H3 'Lys-9', with a weaker activity than KDM4A, KDM4C and KDM4D. Demethylation of Lys residue generates formaldehyde and succinate. Plays a critical role in the development of the central nervous system (CNS). The sequence is that of Lysine-specific demethylase 4B (Kdm4b) from Mus musculus (Mouse).